A 188-amino-acid chain; its full sequence is COMM domain-containing protein 1 (188 aa).

Residues 1 to 122 are sufficient for interaction with SLC12A2; that stretch reads MAGDLEGGKS…RWDNGLRGLS (122 aa). Positions 100, 109, and 133 each coordinate Cu cation. In terms of domain architecture, COMM spans 117-185; that stretch reads GLRGLSWRVD…EVEESINRLM (69 aa). Positions 124 to 188 are required for binding to PtdIns(4,5)P2; it reads RVDGKSQSRH…ESINRLMQAA (65 aa).

This sequence belongs to the COMM domain-containing protein 1 family. As to quaternary structure, component of the commander complex consisting of the CCC subcomplex and the retriever subcomplex. Component of the CCC (COMMD/CCDC22/CCDC93) subcomplex consisting of COMMD1, COMMD2, COMMD3, COMMD4, COMMD5, COMMD6, COMMD7, COMMD8, COMMD9, COMMD10, CCDC22 and CCDC93; within the complex forms a heterodimer with COMMD6. Interacts with VPS35L; the interaction associates the CCC complex with the retriever complex. Identified in a complex with an E3 ubiquitin ligase complex composed of TCEB1/elongin C, CUL2, SOCS1 and RBX1; in the complex interacts directly with SOCS1 and CUL2. Identified in a complex with NF-kappa-B. Interacts directly with SLC12A2. Interacts directly with ATP7B (via the N-terminal region). Interacts with ATP7A. Interacts with FAM107A; this interaction stabilizes COMMD1 in the nucleus. Interacts with CCS, CDKN2A, RELA, REL, RELB, NFKB1/p105, NFKB2/p100, NFKBIB, SCNN1D, SCNN1B, CFTR, CLU, SGK1, AKT1, CUL1, CUL2, CUL3, CUL4A, CUL4B, CUL5, CUL7, HIF1A. In terms of processing, ubiquitinated; undergoes both 'Lys-63'- and 'Lys-48'-linked polyubiquitination. Ubiquitinated by XIAP, leading to its proteasomal degradation.

The protein localises to the nucleus. The protein resides in the cytoplasm. Its subcellular location is the endosome membrane. It is found in the cytoplasmic vesicle. It localises to the early endosome. The protein localises to the recycling endosome. Functionally, scaffold protein in the commander complex that is essential for endosomal recycling of transmembrane cargos; the commander complex is composed of the CCC subcomplex and the retriever subcomplex. Can modulate activity of cullin-RING E3 ubiquitin ligase (CRL) complexes by displacing CAND1; in vitro promotes CRL E3 activity and dissociates CAND1 from CUL1 and CUL2. Promotes ubiquitination of NF-kappa-B subunit RELA and its subsequent proteasomal degradation. Down-regulates NF-kappa-B activity. Involved in the regulation of membrane expression and ubiquitination of SLC12A2. Modulates Na(+) transport in epithelial cells by regulation of apical cell surface expression of amiloride-sensitive sodium channel (ENaC) subunits and by promoting their ubiquitination presumably involving NEDD4L. Promotes the localization of SCNN1D to recycling endosomes. Promotes CFTR cell surface expression through regulation of its ubiquitination. Down-regulates SOD1 activity by interfering with its homodimerization. Plays a role in copper ion homeostasis. Involved in copper-dependent ATP7A trafficking between the trans-Golgi network and vesicles in the cell periphery; the function is proposed to depend on its association within the CCC complex and cooperation with the WASH complex on early endosomes. Can bind one copper ion per monomer. May function to facilitate biliary copper excretion within hepatocytes. Binds to phosphatidylinositol 4,5-bisphosphate (PtdIns(4,5)P2). Involved in the regulation of HIF1A-mediated transcription; competes with ARNT/Hif-1-beta for binding to HIF1A resulting in decreased DNA binding and impaired transcriptional activation by HIF-1. Negatively regulates neuroblastoma G1/S phase cell cycle progression and cell proliferation by stimulating ubiquitination of NF-kappa-B subunit RELA and NF-kappa-B degradation in a FAM107A- and actin-dependent manner. This Mus musculus (Mouse) protein is COMM domain-containing protein 1 (Commd1).